A 245-amino-acid chain; its full sequence is 8-amino-3,8-dideoxy-manno-octulosonate cytidylyltransferase (245 aa).

Belongs to the KdsB family.

It localises to the cytoplasm. The enzyme catalyses 8-amino-3,8-dideoxy-alpha-D-manno-octulosonate + CTP = CMP-8-amino-3,8-dideoxy-alpha-D-manno-oct-2-ulosonate + diphosphate. Its pathway is bacterial outer membrane biogenesis; lipopolysaccharide biosynthesis. In terms of biological role, activates KDO8N (a required 8-carbon sugar) for incorporation into bacterial lipopolysaccharide in the Shewanella genus. The chain is 8-amino-3,8-dideoxy-manno-octulosonate cytidylyltransferase from Shewanella sp. (strain W3-18-1).